Reading from the N-terminus, the 247-residue chain is Protein At-4/1 (247 aa).

2 coiled-coil regions span residues 39–126 and 182–247; these read VESS…YKIR and LLME…LSSS.

As to quaternary structure, interacts with viral tomato spotted wilt virus (TSWV) movement protein NSM, which is involved in cell-to cell spread of viral genome and enlargement of the host plasmodesmata size exclusion limit (SEL). In terms of tissue distribution, expressed in leaves (at protein level).

The protein localises to the endoplasmic reticulum. It localises to the cell junction. The protein resides in the plasmodesma. Functionally, involved in intra- and inter-cellular trafficking through plasmodesmata (PD). This Arabidopsis thaliana (Mouse-ear cress) protein is Protein At-4/1.